Here is a 635-residue protein sequence, read N- to C-terminus: MAGUK p55 subfamily member 4 (635 aa).

Residues 1 to 16 (MRQSDRGAELTNEDRA) show a composition bias toward basic and acidic residues. Positions 1–23 (MRQSDRGAELTNEDRALPTPPDP) are disordered. 2 L27 domains span residues 23-79 (PENG…EKKL) and 86-136 (AQIL…FEPL). Residues 153–234 (IVCLVKNQQP…TIMFKVIPVS (82 aa)) form the PDZ domain. One can recognise an SH3 domain in the interval 241-311 (QKMVYVRAMI…PSNHLLKRKQ (71 aa)). Residues 426–615 (HRLIVLVGPS…ACGQLLSAIQ (190 aa)) enclose the Guanylate kinase-like domain. Positions 567–622 (VDMKFKDEDLQEMEELAQKMESQFGQFFDHVIVNDNLQDACGQLLSAIQKAQEELQ) form a coiled coil.

Belongs to the MAGUK family. May interact with GRIA2. Interacts with MPDZ. Forms a complex with CRB1 and PALS1. Interacts with FASLG. As to expression, detected in the retina (at protein level). Highly enriched in the retina where it is mainly expressed by rod photoreceptors; detected in the inner segment of the photoreceptor layer and in the outer nuclear layer. Also detected at much lower levels in pineal gland, cerebellum, cortex, hippocampus, olfactory bulb, heart, liver and spleen. Expressed in the CA1-CA3 regions of pyramidal cell layers and in the granule cell layer of dentate gyrus in the hippocampus. In the cerebellum, expressed in Purkinje cells and throughout the granule cell layer. In the olfactory bulb, expressed in mitral cells.

The protein resides in the cytoplasm. Functionally, may play a role in retinal photoreceptors development. The sequence is that of MAGUK p55 subfamily member 4 (Mpp4) from Mus musculus (Mouse).